A 115-amino-acid chain; its full sequence is Photosystem II reaction center Psb28 protein (115 aa).

It belongs to the Psb28 family. As to quaternary structure, part of the photosystem II complex.

It localises to the plastid. Its subcellular location is the chloroplast thylakoid membrane. The chain is Photosystem II reaction center Psb28 protein from Cyanidium caldarium (Red alga).